We begin with the raw amino-acid sequence, 349 residues long: Cyclic AMP-dependent transcription factor ATF-4 (349 aa).

Disordered stretches follow at residues 49-75 (FSSD…TGKE), 204-271 (PPCV…TAKV), and 279-298 (KLKK…QKKR). At proline 60 the chain carries 4-hydroxyproline. Threonine 212 is subject to Phosphothreonine. 5 positions are modified to phosphoserine: serine 214, serine 218, serine 223, serine 230, and serine 234. The BetaTrCP degron motif signature appears at 214–223 (SDNDSGICMS). Positions 229–239 (GSPQHSPSTSR) are enriched in polar residues. A 4-hydroxyproline modification is found at proline 235. Serine 247 carries the phosphoserine modification. Position 251 is a phosphoserine; by RPS6KA3 (serine 251). Residues lysine 258 and lysine 270 each participate in a glycyl lysine isopeptide (Lys-Gly) (interchain with G-Cter in SUMO2) cross-link. In terms of domain architecture, bZIP spans 276–339 (LDKKLKKMEQ…QYLKDLIEEV (64 aa)). Positions 278-298 (KKLKKMEQNKTAATRYRQKKR) are basic motif. The interaction with GABBR1 stretch occupies residues 303–339 (ALTGECKELEKKNEALKEKADSLAKEIQYLKDLIEEV). Positions 304-332 (LTGECKELEKKNEALKEKADSLAKEIQYL) are leucine-zipper. Lysine 309 is modified (N6-acetyllysine).

The protein belongs to the bZIP family. In terms of assembly, binds DNA as a homodimer and as a heterodimer. Heterodimer; heterodimerizes with CEBPB. Heterodimer; heterodimerizes with DDIT3/CHOP. Interacts with CEP290 (via an N-terminal region). Interacts with NEK6, DAPK2 (isoform 2) and ZIPK/DAPK3. Interacts (via its leucine zipper domain) with GABBR1 and GABBR2 (via their C-termini). Forms a heterodimer with TXLNG in osteoblasts. Interacts (via its DNA binding domain) with FOXO1 (C-terminal half); the interaction occurs in osteoblasts and regulates glucose homeostasis through suppression of beta-cell proliferation and a decrease in insulin production. Interacts with SATB2; the interaction results in enhanced DNA binding and transactivation by these transcription factors. Interacts with ABRAXAS2. Interacts with TRIB3, inhibiting the transactivation activity of ATF4. Interacts with DISC1; which inhibits ATF4 transcription factor activity by disrupting ATF4 dimerization and DNA-binding. Interacts with EP300/p300; EP300/p300 stabilizes ATF4 and increases its transcriptional activity independently of its catalytic activity by preventing its ubiquitination. In terms of processing, ubiquitinated by SCF(BTRC) in response to mTORC1 signal, followed by proteasomal degradation and leading to down-regulate expression of SIRT4. Interaction with EP300/p300 inhibits ubiquitination by SCF(BTRC). Phosphorylation at Ser-251 by RPS6KA3/RSK2 in osteoblasts enhances transactivation activity and promotes osteoblast differentiation. Phosphorylated on the betaTrCP degron motif at Ser-218, followed by phosphorylation at Thr-212, Ser-223, Ser-230, Ser-234 and Ser-247, promoting interaction with BTRC and ubiquitination. Phosphorylation is promoted by mTORC1. Phosphorylation at Ser-214 by CK2 decreases its stability. Phosphorylated by NEK6. Post-translationally, hydroxylated by PHD3, leading to decreased protein stability. Ubiquitously expressed in adults.

It is found in the nucleus. It localises to the nucleus speckle. The protein localises to the cytoplasm. The protein resides in the cell membrane. Its subcellular location is the cytoskeleton. It is found in the microtubule organizing center. It localises to the centrosome. Transcription factor that binds the cAMP response element (CRE) (consensus: 5'-GTGACGT[AC][AG]-3') and displays two biological functions, as regulator of metabolic and redox processes under normal cellular conditions, and as master transcription factor during integrated stress response (ISR). Binds to asymmetric CRE's as a heterodimer and to palindromic CRE's as a homodimer. Core effector of the ISR, which is required for adaptation to various stress such as endoplasmic reticulum (ER) stress, amino acid starvation, mitochondrial stress or oxidative stress. During ISR, ATF4 translation is induced via an alternative ribosome translation re-initiation mechanism in response to EIF2S1/eIF-2-alpha phosphorylation, and stress-induced ATF4 acts as a master transcription factor of stress-responsive genes in order to promote cell recovery. Promotes the transcription of genes linked to amino acid sufficiency and resistance to oxidative stress to protect cells against metabolic consequences of ER oxidation. Activates the transcription of NLRP1, possibly in concert with other factors in response to ER stress. Activates the transcription of asparagine synthetase (ASNS) in response to amino acid deprivation or ER stress. However, when associated with DDIT3/CHOP, the transcriptional activation of the ASNS gene is inhibited in response to amino acid deprivation. Together with DDIT3/CHOP, mediates programmed cell death by promoting the expression of genes involved in cellular amino acid metabolic processes, mRNA translation and the terminal unfolded protein response (terminal UPR), a cellular response that elicits programmed cell death when ER stress is prolonged and unresolved. Activates the expression of COX7A2L/SCAF1 downstream of the EIF2AK3/PERK-mediated unfolded protein response, thereby promoting formation of respiratory chain supercomplexes and increasing mitochondrial oxidative phosphorylation. Together with DDIT3/CHOP, activates the transcription of the IRS-regulator TRIB3 and promotes ER stress-induced neuronal cell death by regulating the expression of BBC3/PUMA in response to ER stress. May cooperate with the UPR transcriptional regulator QRICH1 to regulate ER protein homeostasis which is critical for cell viability in response to ER stress. In the absence of stress, ATF4 translation is at low levels and it is required for normal metabolic processes such as embryonic lens formation, fetal liver hematopoiesis, bone development and synaptic plasticity. Acts as a regulator of osteoblast differentiation in response to phosphorylation by RPS6KA3/RSK2: phosphorylation in osteoblasts enhances transactivation activity and promotes expression of osteoblast-specific genes and post-transcriptionally regulates the synthesis of Type I collagen, the main constituent of the bone matrix. Cooperates with FOXO1 in osteoblasts to regulate glucose homeostasis through suppression of beta-cell production and decrease in insulin production. Activates transcription of SIRT4. Regulates the circadian expression of the core clock component PER2 and the serotonin transporter SLC6A4. Binds in a circadian time-dependent manner to the cAMP response elements (CRE) in the SLC6A4 and PER2 promoters and periodically activates the transcription of these genes. Mainly acts as a transcriptional activator in cellular stress adaptation, but it can also act as a transcriptional repressor: acts as a regulator of synaptic plasticity by repressing transcription, thereby inhibiting induction and maintenance of long-term memory. Regulates synaptic functions via interaction with DISC1 in neurons, which inhibits ATF4 transcription factor activity by disrupting ATF4 dimerization and DNA-binding. The polypeptide is Cyclic AMP-dependent transcription factor ATF-4 (Mus musculus (Mouse)).